A 173-amino-acid chain; its full sequence is Transcription factor E (173 aa).

One can recognise an HTH TFE/IIEalpha-type domain in the interval 6 to 89 (PLEELLEFVR…YWYVDRETLN (84 aa)).

It belongs to the TFE family. As to quaternary structure, monomer. Interaction with RNA polymerase subunits RpoF and RpoE is necessary for Tfe stimulatory transcription activity. Able to interact with Tbp and RNA polymerase in the absence of DNA promoter. Interacts both with the preinitiation and elongation complexes.

Functionally, transcription factor that plays a role in the activation of archaeal genes transcribed by RNA polymerase. Facilitates transcription initiation by enhancing TATA-box recognition by TATA-box-binding protein (Tbp), and transcription factor B (Tfb) and RNA polymerase recruitment. Not absolutely required for transcription in vitro, but particularly important in cases where Tbp or Tfb function is not optimal. It dynamically alters the nucleic acid-binding properties of RNA polymerases by stabilizing the initiation complex and destabilizing elongation complexes. Seems to translocate with the RNA polymerase following initiation and acts by binding to the non template strand of the transcription bubble in elongation complexes. The chain is Transcription factor E from Ignicoccus hospitalis (strain KIN4/I / DSM 18386 / JCM 14125).